Reading from the N-terminus, the 668-residue chain is Fructose-1,6-bisphosphatase class 3 (668 aa).

This sequence belongs to the FBPase class 3 family. Mn(2+) serves as cofactor.

It carries out the reaction beta-D-fructose 1,6-bisphosphate + H2O = beta-D-fructose 6-phosphate + phosphate. It functions in the pathway carbohydrate biosynthesis; gluconeogenesis. This chain is Fructose-1,6-bisphosphatase class 3, found in Clostridium botulinum (strain ATCC 19397 / Type A).